A 113-amino-acid polypeptide reads, in one-letter code: Probable 4-amino-4-deoxy-L-arabinose-phosphoundecaprenol flippase subunit ArnE (113 aa).

3 consecutive transmembrane segments (helical) span residues 40-60 (FGWL…WLLV), 64-84 (LPLG…TLLA), and 92-112 (VDRH…LMQG).

This sequence belongs to the ArnE family. As to quaternary structure, heterodimer of ArnE and ArnF.

It localises to the cell inner membrane. It functions in the pathway bacterial outer membrane biogenesis; lipopolysaccharide biosynthesis. In terms of biological role, translocates 4-amino-4-deoxy-L-arabinose-phosphoundecaprenol (alpha-L-Ara4N-phosphoundecaprenol) from the cytoplasmic to the periplasmic side of the inner membrane. This Pectobacterium atrosepticum (strain SCRI 1043 / ATCC BAA-672) (Erwinia carotovora subsp. atroseptica) protein is Probable 4-amino-4-deoxy-L-arabinose-phosphoundecaprenol flippase subunit ArnE.